Here is a 291-residue protein sequence, read N- to C-terminus: Acetyl-coenzyme A carboxylase carboxyl transferase subunit beta (291 aa).

The segment at 1-23 (MSWLSKLMPSGIRTDNTPSKKRS) is disordered. The CoA carboxyltransferase N-terminal domain maps to 28 to 291 (LWEKCSNCGS…LGRQPAPEVA (264 aa)). 4 residues coordinate Zn(2+): cysteine 32, cysteine 35, cysteine 51, and cysteine 54. The C4-type zinc-finger motif lies at 32-54 (CSNCGSALYRPELEENLEVCPKC).

This sequence belongs to the AccD/PCCB family. In terms of assembly, acetyl-CoA carboxylase is a heterohexamer composed of biotin carboxyl carrier protein (AccB), biotin carboxylase (AccC) and two subunits each of ACCase subunit alpha (AccA) and ACCase subunit beta (AccD). Zn(2+) is required as a cofactor.

It is found in the cytoplasm. The catalysed reaction is N(6)-carboxybiotinyl-L-lysyl-[protein] + acetyl-CoA = N(6)-biotinyl-L-lysyl-[protein] + malonyl-CoA. It functions in the pathway lipid metabolism; malonyl-CoA biosynthesis; malonyl-CoA from acetyl-CoA: step 1/1. In terms of biological role, component of the acetyl coenzyme A carboxylase (ACC) complex. Biotin carboxylase (BC) catalyzes the carboxylation of biotin on its carrier protein (BCCP) and then the CO(2) group is transferred by the transcarboxylase to acetyl-CoA to form malonyl-CoA. The polypeptide is Acetyl-coenzyme A carboxylase carboxyl transferase subunit beta (Stenotrophomonas maltophilia (strain R551-3)).